A 96-amino-acid chain; its full sequence is Pyrimidine/purine nucleoside phosphorylase (96 aa).

Belongs to the nucleoside phosphorylase PpnP family.

The enzyme catalyses a purine D-ribonucleoside + phosphate = a purine nucleobase + alpha-D-ribose 1-phosphate. It carries out the reaction adenosine + phosphate = alpha-D-ribose 1-phosphate + adenine. It catalyses the reaction cytidine + phosphate = cytosine + alpha-D-ribose 1-phosphate. The catalysed reaction is guanosine + phosphate = alpha-D-ribose 1-phosphate + guanine. The enzyme catalyses inosine + phosphate = alpha-D-ribose 1-phosphate + hypoxanthine. It carries out the reaction thymidine + phosphate = 2-deoxy-alpha-D-ribose 1-phosphate + thymine. It catalyses the reaction uridine + phosphate = alpha-D-ribose 1-phosphate + uracil. The catalysed reaction is xanthosine + phosphate = alpha-D-ribose 1-phosphate + xanthine. Functionally, catalyzes the phosphorolysis of diverse nucleosides, yielding D-ribose 1-phosphate and the respective free bases. Can use uridine, adenosine, guanosine, cytidine, thymidine, inosine and xanthosine as substrates. Also catalyzes the reverse reactions. The chain is Pyrimidine/purine nucleoside phosphorylase from Erwinia tasmaniensis (strain DSM 17950 / CFBP 7177 / CIP 109463 / NCPPB 4357 / Et1/99).